A 398-amino-acid chain; its full sequence is tRNA(Ile)-lysidine synthase (398 aa).

Position 25-30 (25-30 (SGGVDS)) interacts with ATP.

This sequence belongs to the tRNA(Ile)-lysidine synthase family.

The protein localises to the cytoplasm. It catalyses the reaction cytidine(34) in tRNA(Ile2) + L-lysine + ATP = lysidine(34) in tRNA(Ile2) + AMP + diphosphate + H(+). Functionally, ligates lysine onto the cytidine present at position 34 of the AUA codon-specific tRNA(Ile) that contains the anticodon CAU, in an ATP-dependent manner. Cytidine is converted to lysidine, thus changing the amino acid specificity of the tRNA from methionine to isoleucine. In Francisella tularensis subsp. novicida (strain U112), this protein is tRNA(Ile)-lysidine synthase.